Reading from the N-terminus, the 350-residue chain is Trans-enoyl reductase iliB (350 aa).

50-53 contacts NADP(+); sequence VDGK. 145 to 152 is a binding site for substrate; the sequence is AAIATVGL. Residues 177 to 180, Y195, and 242 to 243 contribute to the NADP(+) site; these read SAAS and LD. Substrate is bound at residue 262–266; the sequence is TPTQF. 331–332 serves as a coordination point for NADP(+); that stretch reads IK.

It belongs to the zinc-containing alcohol dehydrogenase family. Monomer.

It carries out the reaction N-[(4E,6E,10S,12Z,14E)-6,10-dimethyl-3-oxohexadeca-4,6,12,14-tetraenoyl]-L-tyrosyl-[ACP] = (3E,5S)-3-[(2E,4E,8S,10E,12Z)-1-hydroxy-4,8-dimethyltetradeca-2,4,10,12-tetraen-1-ylidene]-5-[(4-hydroxyphenyl)methyl]pyrrolidine-2,4-dione + holo-[ACP] + H(+). It participates in mycotoxin biosynthesis. In terms of biological role, trans-enoyl reductase; part of the gene cluster that mediates the biosynthesis of ilicicolin H, a 4-hydroxy-2-pyridonealkaloid that has potent and broad antifungal activities by inhibiting the mitochondrial respiration chain. IliB collaborates with the hybrid PKS-NRPS synthetase iliA to assemble the backbone of ilicicolin H. The PKS portion of iliA and trans-acting enoyl reductase iliB work together to construct an octaketide, and two methyl groups are introduced by the MT domain of iliA during the chain assembly. The nascent chain is then condensed with tyrosine, catalyzed by the iliA C domain, and the resulting PKS-NRPS hybrid is offloaded by the iliA RED domain to form an advanced tetramic acid intermediate. The biosynthesis of ilicicolin H starts with formation of the tetramic acid by the hybrid PKS-NRPS synthetase iliA with the partnering trans-enoyl reductase iliB since iliA lacks a designated enoylreductase (ER) domain. The cytochrome P450 monooxygenase iliC then catalyzes the ring expansion of the tetramate to the acyclic 2-pyridone. The pericyclase iliD further converts the acyclic 2-pyridone into 8-epi-ilicicolin H. 8-epi-ilicicolin H might then spontaneously convert to ilicicolin H since ilicicolin H is produced in the absence of the epimerase iliE, in contrast to what was observed for the Talaromyces variabilis ilicolin H biosynthetic pathway. This Hypocrea jecorina (strain QM6a) (Trichoderma reesei) protein is Trans-enoyl reductase iliB.